A 284-amino-acid polypeptide reads, in one-letter code: Tropomyosin Pen a 1.0102 (284 aa).

The interval 1-51 (MDAIKKKMQAMKLEKDNAMDRADTLEQQNKEANNRAEKSEEEVHNLQKRMQ) is disordered. The stretch at 1 to 273 (MDAIKKKMQA…KEKYKSITDE (273 aa)) forms a coiled coil. The segment covering 12–45 (KLEKDNAMDRADTLEQQNKEANNRAEKSEEEVHN) has biased composition (basic and acidic residues). IgE-binding regions lie at residues 43–57 (VHNL…ENDL), 85–105 (VAAL…SEER), 133–153 (RSLS…EARF), 187–202 (ESKI…VVGN), 247–284 (QKLQ…LSGY), 249–260 (LQKEVDRLEDEL), and 266–281 (KYKS…FSEL).

The protein belongs to the tropomyosin family. In terms of assembly, homodimer.

Tropomyosin, in association with the troponin complex, plays a central role in the calcium dependent regulation of muscle contraction. The sequence is that of Tropomyosin Pen a 1.0102 from Penaeus aztecus (Brown shrimp).